Reading from the N-terminus, the 481-residue chain is Protein nucleotidyltransferase YdiU (481 aa).

8 residues coordinate ATP: Gly85, Gly87, Arg88, Lys108, Asp120, Gly121, Arg172, and Arg179. Catalysis depends on Asp248, which acts as the Proton acceptor. 2 residues coordinate Mg(2+): Asn249 and Asp258. ATP is bound at residue Asp258.

This sequence belongs to the SELO family. Requires Mg(2+) as cofactor. Mn(2+) serves as cofactor.

It carries out the reaction L-seryl-[protein] + ATP = 3-O-(5'-adenylyl)-L-seryl-[protein] + diphosphate. The enzyme catalyses L-threonyl-[protein] + ATP = 3-O-(5'-adenylyl)-L-threonyl-[protein] + diphosphate. It catalyses the reaction L-tyrosyl-[protein] + ATP = O-(5'-adenylyl)-L-tyrosyl-[protein] + diphosphate. The catalysed reaction is L-histidyl-[protein] + UTP = N(tele)-(5'-uridylyl)-L-histidyl-[protein] + diphosphate. It carries out the reaction L-seryl-[protein] + UTP = O-(5'-uridylyl)-L-seryl-[protein] + diphosphate. The enzyme catalyses L-tyrosyl-[protein] + UTP = O-(5'-uridylyl)-L-tyrosyl-[protein] + diphosphate. Functionally, nucleotidyltransferase involved in the post-translational modification of proteins. It can catalyze the addition of adenosine monophosphate (AMP) or uridine monophosphate (UMP) to a protein, resulting in modifications known as AMPylation and UMPylation. The sequence is that of Protein nucleotidyltransferase YdiU from Cereibacter sphaeroides (strain ATCC 17029 / ATH 2.4.9) (Rhodobacter sphaeroides).